We begin with the raw amino-acid sequence, 354 residues long: Tetraacyldisaccharide 4'-kinase (354 aa).

Residue 53–60 (AWGGTGKT) participates in ATP binding.

The protein belongs to the LpxK family.

The catalysed reaction is a lipid A disaccharide + ATP = a lipid IVA + ADP + H(+). It participates in glycolipid biosynthesis; lipid IV(A) biosynthesis; lipid IV(A) from (3R)-3-hydroxytetradecanoyl-[acyl-carrier-protein] and UDP-N-acetyl-alpha-D-glucosamine: step 6/6. In terms of biological role, transfers the gamma-phosphate of ATP to the 4'-position of a tetraacyldisaccharide 1-phosphate intermediate (termed DS-1-P) to form tetraacyldisaccharide 1,4'-bis-phosphate (lipid IVA). This Nitratidesulfovibrio vulgaris (strain ATCC 29579 / DSM 644 / CCUG 34227 / NCIMB 8303 / VKM B-1760 / Hildenborough) (Desulfovibrio vulgaris) protein is Tetraacyldisaccharide 4'-kinase.